Consider the following 507-residue polypeptide: Glycerol kinase (507 aa).

Residue T15 coordinates ADP. Residues T15, T16, and S17 each contribute to the ATP site. Position 15 (T15) interacts with sn-glycerol 3-phosphate. R19 contacts ADP. 4 residues coordinate sn-glycerol 3-phosphate: R85, E86, Y137, and D250. Residues R85, E86, Y137, D250, and Q251 each contribute to the glycerol site. Residues T272, G316, and G418 each contribute to the ADP site. ATP is bound by residues T272, G316, and G418.

Belongs to the FGGY kinase family.

It carries out the reaction glycerol + ATP = sn-glycerol 3-phosphate + ADP + H(+). The protein operates within polyol metabolism; glycerol degradation via glycerol kinase pathway; sn-glycerol 3-phosphate from glycerol: step 1/1. With respect to regulation, inhibited by fructose 1,6-bisphosphate (FBP). In terms of biological role, key enzyme in the regulation of glycerol uptake and metabolism. Catalyzes the phosphorylation of glycerol to yield sn-glycerol 3-phosphate. This Malacoplasma penetrans (strain HF-2) (Mycoplasma penetrans) protein is Glycerol kinase.